The following is a 148-amino-acid chain: HTH-type transcriptional regulator BilQ (148 aa).

Residues 1-140 enclose the HTH marR-type domain; that stretch reads MDFKNLQYES…LVKNLHVVKD (140 aa). Residues 54–77 constitute a DNA-binding region (H-T-H motif); the sequence is LNDVSTEFEVDKAHTTRTISRLEQ.

Its function is as follows. Transcription regulator that regulates expression of the bilirubin reductase operon (bilQ, bilR and bilS). The protein is HTH-type transcriptional regulator BilQ of Clostridioides difficile (strain CD3).